Here is a 128-residue protein sequence, read N- to C-terminus: Small ribosomal subunit protein eS8 (128 aa).

The protein belongs to the eukaryotic ribosomal protein eS8 family. Part of the 30S ribosomal subunit.

This is Small ribosomal subunit protein eS8 from Metallosphaera sedula (strain ATCC 51363 / DSM 5348 / JCM 9185 / NBRC 15509 / TH2).